Here is a 140-residue protein sequence, read N- to C-terminus: Ribosome maturation factor RimP (140 aa).

The protein belongs to the RimP family.

Its subcellular location is the cytoplasm. Functionally, required for maturation of 30S ribosomal subunits. The chain is Ribosome maturation factor RimP from Campylobacter hominis (strain ATCC BAA-381 / DSM 21671 / CCUG 45161 / LMG 19568 / NCTC 13146 / CH001A).